The chain runs to 229 residues: uncharacterized protein (229 aa).

An N-terminal signal peptide occupies residues 1–17 (MKKIIALMLFLTFFAHA).

This is an uncharacterized protein from Escherichia coli O157:H7.